The sequence spans 295 residues: Small ribosomal subunit protein uS2 (295 aa).

Belongs to the universal ribosomal protein uS2 family.

This is Small ribosomal subunit protein uS2 from Rickettsia canadensis (strain McKiel).